A 586-amino-acid polypeptide reads, in one-letter code: Protein CBFA2T2 (586 aa).

The segment at 1 to 95 (MVGIPGPYQF…SSSSSLANQQ (95 aa)) is disordered. A compositionally biased stretch (polar residues) spans 56 to 68 (SSHSNGINHSPPT). Residues 77-90 (QRSSNGPSSSSSSS) are compositionally biased toward low complexity. Residues 102–197 (VRQLSKLKRF…TPSQYLAQHE (96 aa)) form the TAFH domain. Disordered regions lie at residues 204-242 (STSS…AEPP) and 387-417 (IRKG…FGSR). The span at 228 to 237 (DRREEERETA) shows a compositional bias: basic and acidic residues. Over residues 399-409 (SPSSTDSGASD) the composition is skewed to low complexity. Residues 429 to 481 (RKAEEAVNEVKRQAMSEVQKAVSEAEQKAFEMIASERARMEQTIVDAKRRAAE) adopt a coiled-coil conformation. Zn(2+) contacts are provided by cysteine 497, cysteine 500, cysteine 508, cysteine 511, cysteine 517, cysteine 521, histidine 529, and cysteine 533. The MYND-type zinc-finger motif lies at 497–533 (CWNCGRKASETCSGCNIARYCGSFCQHKDWEKHHRIC). Residues 561–586 (SPTLERSSSATSRSSTPASVTAVDGL) are disordered. The segment covering 566-586 (RSSSATSRSSTPASVTAVDGL) has biased composition (low complexity).

It localises to the nucleus. May act as a transcriptional corepressor. The polypeptide is Protein CBFA2T2 (cbfa2t2) (Xenopus laevis (African clawed frog)).